We begin with the raw amino-acid sequence, 147 residues long: SsrA-binding protein (147 aa).

Positions 124–147 (KKHDKRQDIKDRDWARKQARQDFS) are disordered. Residues 128-147 (KRQDIKDRDWARKQARQDFS) are compositionally biased toward basic and acidic residues.

This sequence belongs to the SmpB family.

Its subcellular location is the cytoplasm. Functionally, required for rescue of stalled ribosomes mediated by trans-translation. Binds to transfer-messenger RNA (tmRNA), required for stable association of tmRNA with ribosomes. tmRNA and SmpB together mimic tRNA shape, replacing the anticodon stem-loop with SmpB. tmRNA is encoded by the ssrA gene; the 2 termini fold to resemble tRNA(Ala) and it encodes a 'tag peptide', a short internal open reading frame. During trans-translation Ala-aminoacylated tmRNA acts like a tRNA, entering the A-site of stalled ribosomes, displacing the stalled mRNA. The ribosome then switches to translate the ORF on the tmRNA; the nascent peptide is terminated with the 'tag peptide' encoded by the tmRNA and targeted for degradation. The ribosome is freed to recommence translation, which seems to be the essential function of trans-translation. In Neorickettsia sennetsu (strain ATCC VR-367 / Miyayama) (Ehrlichia sennetsu), this protein is SsrA-binding protein.